A 548-amino-acid chain; its full sequence is (S)-beta-macrocarpene synthase (548 aa).

Positions 302 and 306 each coordinate Mg(2+). The substrate site is built by Asp302, Asp306, Arg443, and Asn446. Residues 302 to 306 (DDTLD) carry the DDXXD motif motif. Asn446, Ser450, and Glu454 together coordinate Mg(2+).

The protein belongs to the terpene synthase family. In terms of assembly, monomer. Mg(2+) serves as cofactor. The cofactor is Mn(2+). In terms of tissue distribution, expressed in roots. Not detected in leaves, unless damaged by herbivory or infected by fungi.

The protein resides in the cytoplasm. The catalysed reaction is (S)-beta-bisabolene = (S)-beta-macrocarpene. It carries out the reaction (2E,6E)-farnesyl diphosphate = (S)-beta-bisabolene + diphosphate. The enzyme catalyses (2E)-geranyl diphosphate = (4S)-limonene + diphosphate. It catalyses the reaction (2E)-geranyl diphosphate = beta-myrcene + diphosphate. The catalysed reaction is (2E)-geranyl diphosphate = terpinolene + diphosphate. It carries out the reaction (2E)-geranyl diphosphate + H2O = (S)-linalool + diphosphate. Its pathway is secondary metabolite biosynthesis; terpenoid biosynthesis. Its function is as follows. Involved in the biosynthesis of the bicyclic sesquiterpene (S)-beta-macrocarpene. Can use both geranyl diphosphate and farnesyl diphosphate as substrate, but not geranylgeranyl diphosphate. Produces mainly (S)-beta-macrocarpene, but also smaller amounts of beta-bisabolene and (E)-beta-farnesene when used with farnesyl diphosphate as substrate. In the presence of geranyl diphosphate, produces the acyclic monoterpenes beta-myrcene and linalool along with minor amounts of the cyclic compounds limonene, alpha-thujene, sabinene and alpha-terpinolene. May be involved in plant defense. This Zea mays (Maize) protein is (S)-beta-macrocarpene synthase.